Consider the following 85-residue polypeptide: UPF0297 protein Cbei_1105 (85 aa).

It belongs to the UPF0297 family.

The polypeptide is UPF0297 protein Cbei_1105 (Clostridium beijerinckii (strain ATCC 51743 / NCIMB 8052) (Clostridium acetobutylicum)).